The sequence spans 366 residues: Septin-1 (366 aa).

The Septin-type G domain occupies lysine 22–serine 295. Residues glycine 32–serine 39 form a G1 motif region. GTP-binding positions include glycine 32–serine 39, threonine 66, glycine 92, and lysine 171–glutamate 179. Residues aspartate 89–glycine 92 are G3 motif. The G4 motif stretch occupies residues glycine 170–aspartate 173. Serine 206 carries the phosphoserine modification. GTP contacts are provided by glycine 229 and arginine 244. Position 247 is a phosphoserine; by AURKB (serine 247). Phosphothreonine is present on threonine 250. 2 positions are modified to phosphoserine; by AURKB: serine 306 and serine 314. Positions glutamate 347–leucine 366 are disordered. Over residues methionine 349–leucine 366 the composition is skewed to low complexity.

It belongs to the TRAFAC class TrmE-Era-EngA-EngB-Septin-like GTPase superfamily. Septin GTPase family. In terms of assembly, septins polymerize into heterooligomeric protein complexes that form filaments, and can associate with cellular membranes, actin filaments and microtubules. GTPase activity is required for filament formation. Interacts with AURKB.

The protein localises to the cytoplasm. It localises to the cytoskeleton. It is found in the microtubule organizing center. The protein resides in the centrosome. Its subcellular location is the midbody. Its function is as follows. Filament-forming cytoskeletal GTPase. May play a role in cytokinesis (Potential). The chain is Septin-1 from Rattus norvegicus (Rat).